Consider the following 393-residue polypeptide: 4-hydroxyphenylpyruvate dioxygenase (393 aa).

Residue threonine 2 is modified to N-acetylthreonine. VOC domains follow at residues 18–149 (HFHS…LVEK) and 180–338 (MIDH…IFTK). Lysine 132 carries the post-translational modification N6-succinyllysine. Histidine 183 serves as a coordination point for Fe cation. Phosphoserine occurs at positions 211, 226, and 250. Residues histidine 266 and glutamate 349 each contribute to the Fe cation site.

It belongs to the 4HPPD family. Homodimer. Fe cation is required as a cofactor.

The protein resides in the cytoplasm. Its subcellular location is the endoplasmic reticulum membrane. The protein localises to the golgi apparatus membrane. The catalysed reaction is 3-(4-hydroxyphenyl)pyruvate + O2 = homogentisate + CO2. It participates in amino-acid degradation; L-phenylalanine degradation; acetoacetate and fumarate from L-phenylalanine: step 3/6. Catalyzes the conversion of 4-hydroxyphenylpyruvic acid to homogentisic acid, one of the steps in tyrosine catabolism. The chain is 4-hydroxyphenylpyruvate dioxygenase (HPD) from Homo sapiens (Human).